The primary structure comprises 116 residues: Ribosome-binding factor A (116 aa).

Belongs to the RbfA family. As to quaternary structure, monomer. Binds 30S ribosomal subunits, but not 50S ribosomal subunits or 70S ribosomes.

Its subcellular location is the cytoplasm. Functionally, one of several proteins that assist in the late maturation steps of the functional core of the 30S ribosomal subunit. Associates with free 30S ribosomal subunits (but not with 30S subunits that are part of 70S ribosomes or polysomes). Required for efficient processing of 16S rRNA. May interact with the 5'-terminal helix region of 16S rRNA. This chain is Ribosome-binding factor A, found in Streptococcus pneumoniae (strain ATCC 700669 / Spain 23F-1).